A 230-amino-acid chain; its full sequence is Cytidylate kinase (230 aa).

An ATP-binding site is contributed by 16–24 (GPASAGKST).

The protein belongs to the cytidylate kinase family. Type 1 subfamily.

The protein localises to the cytoplasm. It catalyses the reaction CMP + ATP = CDP + ADP. The enzyme catalyses dCMP + ATP = dCDP + ADP. The sequence is that of Cytidylate kinase from Lactobacillus johnsonii (strain CNCM I-12250 / La1 / NCC 533).